The chain runs to 127 residues: Fluoride-specific ion channel FluC (127 aa).

4 helical membrane-spanning segments follow: residues 6-26 (LAIS…GLGF), 37-57 (TLLA…FFAA), 67-87 (LLVI…SAEV), and 96-116 (LLWA…MTLL). Na(+) is bound by residues Gly75 and Thr78.

Belongs to the fluoride channel Fluc/FEX (TC 1.A.43) family.

The protein localises to the cell inner membrane. It carries out the reaction fluoride(in) = fluoride(out). With respect to regulation, na(+) is not transported, but it plays an essential structural role and its presence is essential for fluoride channel function. Its function is as follows. Fluoride-specific ion channel. Important for reducing fluoride concentration in the cell, thus reducing its toxicity. The protein is Fluoride-specific ion channel FluC of Tolumonas auensis (strain DSM 9187 / NBRC 110442 / TA 4).